An 856-amino-acid chain; its full sequence is Dual specificity protein kinase TTK (856 aa).

An N-acetylmethionine modification is found at methionine 1. At threonine 32 the chain carries Phosphothreonine. 3 positions are modified to phosphoserine: serine 36, serine 277, and serine 342. At threonine 380 the chain carries Phosphothreonine. A phosphoserine mark is found at serine 383, serine 435, and serine 454. In terms of domain architecture, Protein kinase spans 524 to 790 (YSILKQIGSG…IPELLTHPYV (267 aa)). ATP contacts are provided by residues 530–538 (IGSGGSSKV) and lysine 552. Aspartate 646 functions as the Proton acceptor in the catalytic mechanism. Serine 820 carries the phosphoserine modification. The tract at residues 837 to 856 (CGEGQDSSSSKTFDKKRERK) is disordered.

Belongs to the protein kinase superfamily. Ser/Thr protein kinase family. In terms of assembly, interacts with TPR; the interactions occurs in a microtubule-independent manner. Interacts with MAD1L1 and MAD2L1. Autophosphorylated. In terms of tissue distribution, present in rapidly proliferating cell lines; high levels in testis, bone marrow, spleen and thymus. Low levels in brain, heart, lung and kidney.

The catalysed reaction is L-seryl-[protein] + ATP = O-phospho-L-seryl-[protein] + ADP + H(+). It catalyses the reaction L-threonyl-[protein] + ATP = O-phospho-L-threonyl-[protein] + ADP + H(+). The enzyme catalyses L-tyrosyl-[protein] + ATP = O-phospho-L-tyrosyl-[protein] + ADP + H(+). With respect to regulation, inhibited by the ATP-competitive kinase inhibitor, SP600125. In terms of biological role, involved in mitotic spindle assembly checkpoint signaling, a process that delays anaphase until chromosomes are bioriented on the spindle, and in the repair of incorrect mitotic kinetochore-spindle microtubule attachments. Phosphorylates MAD1L1 to promote the mitotic spindle assembly checkpoint. Phosphorylates CDCA8/Borealin leading to enhanced AURKB activity at the kinetochore. Phosphorylates SKA3 at 'Ser-34' leading to dissociation of the SKA complex from microtubules and destabilization of microtubule-kinetochore attachments. Phosphorylates KNL1, KNTC1 and autophosphorylates. Phosphorylates MCRS1 which enhances recruitment of KIF2A to the minus end of spindle microtubules and promotes chromosome alignment. The sequence is that of Dual specificity protein kinase TTK (Ttk) from Mus musculus (Mouse).